The following is a 1053-amino-acid chain: Polyphosphate kinase (1053 aa).

Disordered stretches follow at residues 23–155, 200–245, and 302–328; these read LKIN…QLME, VQNP…TKSK, and NNNN…STSP. A compositionally biased stretch (low complexity) spans 32 to 50; the sequence is STTTTTSTTTTTTTTTSTS. Residues 81–102 show a composition bias toward acidic residues; that stretch reads VDFEDDYDEESSSFDEEDEDSA. The segment covering 143 to 155 has biased composition (polar residues); that stretch reads TTANPVQNCQLME. Low complexity predominate over residues 215 to 239; sequence SSGSSSSSSSNNNNSNSNSNGNCNS. His800 functions as the Phosphohistidine intermediate in the catalytic mechanism. The interval 1027-1053 is disordered; sequence RSSPIDEDSQTQFMNQTNQKHPVIWSK. The segment covering 1036–1046 has biased composition (polar residues); the sequence is QTQFMNQTNQK.

This sequence belongs to the polyphosphate kinase 1 (PPK1) family. As to quaternary structure, hexamer. May form higher oligomeric structures in the presence of ATP.

It localises to the vesicle. It catalyses the reaction [phosphate](n) + ATP = [phosphate](n+1) + ADP. In terms of biological role, catalyzes the reversible transfer of the terminal phosphate of ATP to form a long-chain polyphosphate (polyP). Produces polyP in a broad range of chain lengths (50-300 Pi residues). Involved in development (growth and fruiting body formation), sporulation, phagocytosis, cell division and the late stages of cytokinesis. The protein is Polyphosphate kinase (ppkA) of Dictyostelium discoideum (Social amoeba).